The following is a 53-amino-acid chain: Large ribosomal subunit protein bL33A (53 aa).

This sequence belongs to the bacterial ribosomal protein bL33 family.

This is Large ribosomal subunit protein bL33A from Mycoplasmoides gallisepticum (strain R(low / passage 15 / clone 2)) (Mycoplasma gallisepticum).